Here is a 203-residue protein sequence, read N- to C-terminus: CASP-like protein 4B2 (203 aa).

The Cytoplasmic portion of the chain corresponds to 1 to 57; the sequence is MAMVTADASAAADAATKQPDVEKDYSSYNGASTAGAGGGGVVESVVARWRREDMLDK. The chain crosses the membrane as a helical span at residues 58 to 78; sequence CPLALHAAAAAFAFVALVLVA. The Extracellular segment spans residues 79–92; sequence SNQHGDWMQFDRYQ. A helical transmembrane segment spans residues 93–113; it reads EYMYLLAIAALAFAYSLAQAL. Residues 114 to 135 are Cytoplasmic-facing; sequence RHAHRMRGGADPIPAPSARLFD. Residues 136-156 traverse the membrane as a helical segment; sequence FIADQVVAYLLMSALSAAIPI. Topologically, residues 157–171 are extracellular; that stretch reads TNRMRTAVINNFTDA. N167 carries an N-linked (GlcNAc...) asparagine glycan. Residues 172 to 192 form a helical membrane-spanning segment; it reads TAAAISMAFLAFVALALSATV. Residues 193 to 203 are Cytoplasmic-facing; sequence SGYKLSRQMYM.

The protein belongs to the Casparian strip membrane proteins (CASP) family. In terms of assembly, homodimer and heterodimers.

It is found in the cell membrane. The polypeptide is CASP-like protein 4B2 (Hordeum vulgare subsp. vulgare (Domesticated barley)).